The sequence spans 608 residues: uncharacterized protein (608 aa).

A helical membrane pass occupies residues 4–24 (LIFMALLMSLLFIGTVFGYGD).

The protein to M.jannaschii MJ1394 and A.fulgidus AF2028.

The protein resides in the membrane. This is an uncharacterized protein from Methanocaldococcus jannaschii (strain ATCC 43067 / DSM 2661 / JAL-1 / JCM 10045 / NBRC 100440) (Methanococcus jannaschii).